A 192-amino-acid polypeptide reads, in one-letter code: Ion-translocating oxidoreductase complex subunit A (192 aa).

A run of 6 helical transmembrane segments spans residues Ile-5–Leu-25, Val-39–Val-59, Ile-63–Val-83, Leu-102–Leu-122, Val-134–Leu-154, and Ser-171–Val-191.

Belongs to the NqrDE/RnfAE family. The complex is composed of six subunits: RnfA, RnfB, RnfC, RnfD, RnfE and RnfG.

It localises to the cell inner membrane. Part of a membrane-bound complex that couples electron transfer with translocation of ions across the membrane. The protein is Ion-translocating oxidoreductase complex subunit A of Haemophilus influenzae (strain ATCC 51907 / DSM 11121 / KW20 / Rd).